Reading from the N-terminus, the 183-residue chain is Capsid protein (183 aa).

The segment at 143–183 (LPETTVVRRRGRSPRRRTPSPRRRRSKSPRRRRSQSRESQC) is disordered. The segment covering 149 to 176 (VRRRGRSPRRRTPSPRRRRSKSPRRRRS) has biased composition (basic residues). Residues Ser155, Ser162, and Ser170 each carry the phosphoserine; by host modification. The 1; half-length repeat unit spans residues 155-160 (SPRRRT). The tract at residues 155-176 (SPRRRTPSPRRRRSKSPRRRRS) is 3 X 7 AA repeats of S-P-R-R-R-[PR]-S. Positions 158–175 (RRTPSPRRRRSKSPRRRR) match the Bipartite nuclear localization signal motif. 2 consecutive repeat copies span residues 162-168 (SPRRRRS) and 170-176 (SPRRRRS). The RNA binding stretch occupies residues 177-183 (QSRESQC).

This sequence belongs to the orthohepadnavirus core antigen family. In terms of assembly, homodimerizes, then multimerizes. Interacts with cytosol exposed regions of viral L glycoprotein present in the reticulum-to-Golgi compartment. Interacts with human FLNB. Phosphorylated form interacts with host importin alpha; this interaction depends on the exposure of the NLS, which itself depends upon genome maturation and/or phosphorylation of the capsid protein. Interacts with host NUP153. Post-translationally, phosphorylated by host SRPK1, SRPK2, and maybe protein kinase C or GAPDH. Phosphorylation is critical for pregenomic RNA packaging. Protein kinase C phosphorylation is stimulated by HBx protein and may play a role in transport of the viral genome to the nucleus at the late step during the viral replication cycle.

The protein resides in the virion. It is found in the host cytoplasm. In terms of biological role, self assembles to form an icosahedral capsid. Most capsids appear to be large particles with an icosahedral symmetry of T=4 and consist of 240 copies of capsid protein, though a fraction forms smaller T=3 particles consisting of 180 capsid proteins. Entering capsids are transported along microtubules to the nucleus. Phosphorylation of the capsid is thought to induce exposure of nuclear localization signal in the C-terminal portion of the capsid protein that allows binding to the nuclear pore complex via the importin (karyopherin-) alpha and beta. Capsids are imported in intact form through the nuclear pore into the nuclear basket, where it probably binds NUP153. Only capsids that contain the mature viral genome can release the viral DNA and capsid protein into the nucleoplasm. Immature capsids get stuck in the basket. Capsids encapsulate the pre-genomic RNA and the P protein. Pre-genomic RNA is reverse-transcribed into DNA while the capsid is still in the cytoplasm. The capsid can then either be directed to the nucleus, providing more genomes for transcription, or bud through the endoplasmic reticulum to provide new virions. In Homo sapiens (Human), this protein is Capsid protein.